The chain runs to 49 residues: Large ribosomal subunit protein bL33A (49 aa).

Belongs to the bacterial ribosomal protein bL33 family.

The protein is Large ribosomal subunit protein bL33A of Latilactobacillus sakei subsp. sakei (strain 23K) (Lactobacillus sakei subsp. sakei).